Reading from the N-terminus, the 88-residue chain is Putative transposase InsN for insertion sequence element IS911B (88 aa).

This sequence belongs to the transposase 8 family.

Its function is as follows. Involved in the transposition of the insertion sequence IS911. The protein is Putative transposase InsN for insertion sequence element IS911B (insN2) of Escherichia coli (strain K12).